A 904-amino-acid polypeptide reads, in one-letter code: MICAL-like protein 2 (904 aa).

Residues M1 to H107 form the Calponin-homology (CH) domain. Residues M1 to P260 form a forms an intramolecular interaction with the C-terminal coiled coil domain keeping the protein in a closed conformation region. 3 positions are modified to phosphoserine: S110, S143, and S153. The tract at residues G117–A178 is disordered. The span at S143–S153 shows a compositional bias: pro residues. Residues S186 to A248 enclose the LIM zinc-binding domain. Position 249 is a phosphoserine (S249). The tract at residues K251 to E722 is disordered. The necessary and sufficient for interaction with actinins stretch occupies residues G261–Q388. Residues G261–E697 form a mediates targeting to the cell plasma membrane region. Residues S267 to Q277 show a composition bias toward polar residues. 2 stretches are compositionally biased toward low complexity: residues N293–V314 and S349–P362. S294 carries the post-translational modification Phosphoserine. Over residues A363–A374 the composition is skewed to pro residues. Low complexity predominate over residues A385–T400. The segment covering P408–S433 has biased composition (polar residues). The segment covering A459–A480 has biased composition (low complexity). Residues S494 and S504 each carry the phosphoserine modification. 2 stretches are compositionally biased toward low complexity: residues L520–A534 and S542–R553. The span at K564 to E578 shows a compositional bias: polar residues. Positions P593–R622 are enriched in basic and acidic residues. S598 bears the Phosphoserine mark. T644 is modified (phosphothreonine). Pro residues predominate over residues P647–P661. A phosphoserine mark is found at S649, S658, S660, and S726. The segment at E698–L807 is forms an intramolecular interaction with the N-terminal Calponin-homology and LIM zinc-binding domains-containing region keeping the protein in a closed conformation. A bMERB domain is found at T723 to D874. Positions L735–D771 form a coiled coil. A mediates interaction with RAB13 and is required for transition from the closed to the opened conformation region spans residues L807–S903.

In terms of assembly, interacts with RAB13 (GTP-bound form); competes with RAB8A and is involved in tight junctions assembly. Interacts with RAB8A; competes with RAB13 and is involved in E-cadherin endocytic recycling. Interacts with RAB8B. Interacts (preferentially in opened conformation) with ACTN1 and ACTN4; stimulated by RAB13 activation. Interacts (via calponin-homology (CH) domain) with the filamins FLNA, FLNB and FLNC (via actin-binding domain).

It is found in the cell membrane. The protein localises to the cell junction. It localises to the tight junction. Its subcellular location is the recycling endosome. The protein resides in the cell projection. It is found in the cytoplasm. The protein localises to the cytoskeleton. Functionally, effector of small Rab GTPases which is involved in junctional complexes assembly through the regulation of cell adhesion molecules transport to the plasma membrane and actin cytoskeleton reorganization. Regulates the endocytic recycling of occludins, claudins and E-cadherin to the plasma membrane and may thereby regulate the establishment of tight junctions and adherens junctions. In parallel, may regulate actin cytoskeleton reorganization directly through interaction with F-actin or indirectly through actinins and filamins. Most probably involved in the processes of epithelial cell differentiation, cell spreading and neurite outgrowth. Undergoes liquid-liquid phase separation to form tubular recycling endosomes. Plays 2 sequential roles in the biogenesis of tubular recycling endosomes: first organizes phase separation and then the closed form formed by interaction with RAB8A promotes endosomal tubulation. The sequence is that of MICAL-like protein 2 from Homo sapiens (Human).